Consider the following 337-residue polypeptide: Tetraacyldisaccharide 4'-kinase (337 aa).

55-62 lines the ATP pocket; sequence TAGGNGKT.

This sequence belongs to the LpxK family.

It catalyses the reaction a lipid A disaccharide + ATP = a lipid IVA + ADP + H(+). It functions in the pathway glycolipid biosynthesis; lipid IV(A) biosynthesis; lipid IV(A) from (3R)-3-hydroxytetradecanoyl-[acyl-carrier-protein] and UDP-N-acetyl-alpha-D-glucosamine: step 6/6. In terms of biological role, transfers the gamma-phosphate of ATP to the 4'-position of a tetraacyldisaccharide 1-phosphate intermediate (termed DS-1-P) to form tetraacyldisaccharide 1,4'-bis-phosphate (lipid IVA). The polypeptide is Tetraacyldisaccharide 4'-kinase (Sodalis glossinidius (strain morsitans)).